Reading from the N-terminus, the 124-residue chain is Small ribosomal subunit protein uS12 (124 aa).

At D89 the chain carries 3-methylthioaspartic acid.

Belongs to the universal ribosomal protein uS12 family. Part of the 30S ribosomal subunit. Contacts proteins S8 and S17. May interact with IF1 in the 30S initiation complex.

Functionally, with S4 and S5 plays an important role in translational accuracy. Its function is as follows. Interacts with and stabilizes bases of the 16S rRNA that are involved in tRNA selection in the A site and with the mRNA backbone. Located at the interface of the 30S and 50S subunits, it traverses the body of the 30S subunit contacting proteins on the other side and probably holding the rRNA structure together. The combined cluster of proteins S8, S12 and S17 appears to hold together the shoulder and platform of the 30S subunit. This Histophilus somni (strain 129Pt) (Haemophilus somnus) protein is Small ribosomal subunit protein uS12.